Here is a 389-residue protein sequence, read N- to C-terminus: Epidermis-specific secreted glycoprotein EP1 (389 aa).

The N-terminal stretch at 1–24 is a signal peptide; it reads MARFFPLTLTILLFFIQRIDFCHT. N-linked (GlcNAc...) (complex) asparagine glycosylation occurs at Asn-29. Residues 88 to 193 enclose the Bulb-type lectin domain; the sequence is MRWVWEANRG…ASPGENVNGP (106 aa). Asn-103, Asn-230, and Asn-235 each carry an N-linked (GlcNAc...) asparagine glycan. Asn-274 carries an N-linked (GlcNAc...) (high mannose) asparagine glycan.

As to expression, in 14-day old seedlings, expressed in the epidermis and apical dome of the shoot and in the hypocotyl, cotyledon and epidermis of the root. In developing seeds, expressed in both the inner and outer epidermis of the integument.

It is found in the secreted. Its function is as follows. May be involved in the limitation of water flow through the outer epidermal cell wall, either by direct modification of wall structure or as a signal instructing the protoplast to restrict water transport across the cell wall. This is Epidermis-specific secreted glycoprotein EP1 (EP1) from Daucus carota (Wild carrot).